Consider the following 488-residue polypeptide: Splicing factor U2AF 65 kDa subunit (488 aa).

Basic and acidic residues-rich tracts occupy residues 25 to 55 (LESL…DEDR) and 78 to 129 (DRRD…KYRF). A disordered region spans residues 25–133 (LESLQEDVKP…PKKYRFWDVP (109 aa)). RRM domains are found at residues 175-257 (RRLY…RPRD), 282-359 (NKIF…LACA), and 389-479 (EILC…YYDV).

Belongs to the splicing factor SR family. In terms of assembly, forms a heterodimer with the U2AF small subunit.

The protein resides in the nucleus. Functionally, necessary for the splicing of pre-mRNA. Binds to the polypyrimidine tract of introns early during spliceosome assembly. This is Splicing factor U2AF 65 kDa subunit (uaf-1) from Caenorhabditis briggsae.